We begin with the raw amino-acid sequence, 157 residues long: MEKFPMTPGGFEKLKEELRWRQQSERPRIIEAIAEARAHGDLSENAEYHAAKEAQSLNEGRINELEDLVARAEIIDVSKLSGDRIKFGATVTMIDEDTDEEKVYQIVGDQEADVKEGRISISSPIARALIGKGEGDTIEVNAPGGSRSYEIVGLKFV.

The protein belongs to the GreA/GreB family.

Functionally, necessary for efficient RNA polymerase transcription elongation past template-encoded arresting sites. The arresting sites in DNA have the property of trapping a certain fraction of elongating RNA polymerases that pass through, resulting in locked ternary complexes. Cleavage of the nascent transcript by cleavage factors such as GreA or GreB allows the resumption of elongation from the new 3'terminus. GreA releases sequences of 2 to 3 nucleotides. The protein is Transcription elongation factor GreA of Brucella anthropi (strain ATCC 49188 / DSM 6882 / CCUG 24695 / JCM 21032 / LMG 3331 / NBRC 15819 / NCTC 12168 / Alc 37) (Ochrobactrum anthropi).